The following is a 3019-amino-acid chain: MSTLPKPQRKTKRNTNRRPMDVKFPGGGQIVGGVYLLPRRGPRLGVRATRKTSERSQPRGRRQPIPKARQPQGRHWAQPGYPWPLYGNEGCGWAGWLLSPRGSRPHWGPNDPRRRSRNLGKVIDTLTCGFADLMGYIPVVGAPLGGVAAALAHGVRAIEDGINYATGNLPGCSFSIFLLALLSCLTTPASALTYGNSSGLYHLTNDCPNSSIVLEADAMILHLPGCLPCVKVGNQSTCWHAVSPTLAIPNASTPATGFRRHVDLLAGAAVVCSSLYIGDLCGSLFLAGQLFTFQPRRHWTVQECNCSIYTGHVTGHRMAWDMMMSWSPTTTLVLSSILRVPEICASVIFGGHWGILLAVAYFGMAGNWLKVLAVLFLFAGVEATTTVGHGVARTTAGITGLFSPGASQNLQLIKNGSSWHINRTALNCNDSLQTGFLASLFYVRKFNSSGCPERMAVCKSLADFRQGWGQITYKVNISGPSDDRPYCWHYAPRPCDVVPASTVCGPVYCFTPSPVVIGTTDRRGNPTYTWGENETDVFMLESLRPPTGGWFGCTWMNSTGFTKTCGAPPCQIIPGDYNSSANELLCPTDCFRKHPEATYQRCGSGPWVTPRCLVDYPYRLWHYPCTVNFTVHKVRMFVGGIEHRFDAACNWTRGERCELHDRDRIEMSPLLFSTTQLAILPCSFSTMPALSTGLIHLHQNIVDVQYLYGVSSSVTSWVVKWEYIVLMFLVLADARICTCLWLMLLISNVEAAVERLVVLNAASAAGTAGWWWAVLFLCCVWYVKGRLVPACTYMALGMWPLLLTILALPHRAYAMDNEQAASLGAVGLLAITIFTITPTYKKLLTCFIWWNQYFLARAEAMVHEWVPDLRVRGGRDSIILLTCLLHPQLGFEVTKILLAILAPLYILQYSLLKVPYFVRAHILLRACLLVRRLAGGRYVQACLLRLGAWTGTFIYDHLAPLSDWASDGLRDLAVAVEPVIFSPMEKKIITWGADTAACGDILSGLPVSARLGNLVLLGPADDMQRGGWKLLAPITAYAQQTRGLVGTIVTSLTGRDKNEVEGEVQVVSTATQSFLATSINGVMWTVYHGAGSKTLAGPKGPVCQMYTNVDKDLVGWPSPPGARSLTPCTCGSSDLYLVTREADVIPARRRGDNRAALLSPRPISTLKGSSGGPVMCPSGHVVGLFRAAVCTRGVAKSLDFIPVENMETTMRSPSFTDNSTPPAVPQTYQVGYLHAPTGSGKSTRVPAAYASQGYKVLVLNPSVAATLSFGSYMRQAYGVEPNVRTGVRTVTTGGAITYSTYGKFLADGGCSGGAYDIIICDECHSTDPTTVLGIGTVLDQAETAGARLTVLATATPPGSITVPHPNITETALPTTGEIPFYGKAIPLEYIKGGRHLIFCHSKKKCDELAGKLKSLGLNAVAFYRGVDVSVIPTSGDVVICATDALMTGYTGDFDSVIDCNVAVTQVVDFSLDPTFSIETTTVPQDAVSRSQRRGRTGRGKPGVYRFVSQGERPSGMFDTVVLCEAYDTGCAWYELTPSETTVRLRAYMNTPGLPVCQDHLEFWEGVFTGLTHIDAHFLSQTKQGGENFAYLVAYQATVCARAKAPPPSWDTMWKCLIRLKPTLTGPTPLLYRLGAVQNEIITTHPITKYIMTCMSADLEVITSTWVLVGGVLAALAAYCLSVGCVVICGRITLTGKPAVVPDREILYQQFDEMEECSRHIPYLAEGQQIAEQFRQKVLGLLQASAKQAEELKPAVHSAWPRMEEFWRKHMWNFVSGIQYLAGLSTLPGNPAVASLMSFTASLTSPLRTSQTLLLNILGGWIAAQVAPPPASTAFVVSGLAGAAVGSIRLGRVLVDVLAGYGAGVSGALVAFKIMSGDCPTTEDMVNLLPALLSPGALVVGVVCAAILRRHVGPAEGANQWMNRLIAFASRGNHVSPTHYVPETDASKNVTQILTSLTITSLLRRLHQWVNEDTATPCATSWLRDVWDWVCTVLSDFKVWLQAKLFPRLPGIPFLSCQTGYRGVWAGDGVCHTTCTCGAVIAGHVKNGTMKITGPKTCSNTWHGTFPINATTTGPSTPRPAPNYQRALWRVSAEDYVEVRRLGDCHYVVGVTAEGLKCPCQVPAPEFFTEVDGVRIHRYAPPCKPLLRDEVTFSVGLSNYAIGSQLPCEPEPDVTVVTSMLTDPTHITAETASRRLKRGSPPSLASSSASQLSAPSLKATCTTSKDHPDMELIEANLLWRQEMGGNITRVESENKVVVLDSFEPLTAEYDEREISVSAECHRPPRHKFPPALPIWARPDYNPPLLQAWQMPGYEPPVVSGCAVAPPKPAPIPPPRRKRLVHLDESTVSRALAQLADKVFVEGSSDPGPSSDSGLSITSPDPPAPTTPDDACSEAESYSSMPPLEGEPGDPDLSSGSWSTVSDQDDVVCCSMSYSWTGALITPCAAEEEKLPINPLSNSLIRHHNMVYSTTSRSASLRQKKVTFDRLQVFDQHYQDVLKEIKLRASTVQARLLSIEEACDLTPSHSARSKYGYGAQDVRSHASKAINHIRSVWEDLLEDSDTPIPTTIMAKNEVFCVDPSKGGRKPARLIVYPDLGVRVCEKMALYDVTRKLPQAVMGSAYGFQYSPNQRVEYLLKMWRSKKVPMGFSYDTRCFDSTVTERDIRTENDIYQSCQLDPVARRAVSSLTERLYVGGPMVNSKGQSCGYRRCRASGVLPTSMGNTLTCYLKAQAACRAANIKDCDMLVCGDDLVVICESAGVQEDTASLRAFTDAMTRYSAPPGDVPQPTYDLELITSCSSNVSVAHDGNGKRYYYLTRDCTTPLARAAWETARHTPVNSWLGNIIMFAPTIWVRMVLMTHFFSILQSQEQLEKALDFDIYGVTYSVSPLDLPAIIQRLHGMAAFSLHGYSPTELNRVGACLRKLGVPPLRAWRHRARAVRAKLIAQGGKAAICGKYLFNWAVKTKLKLTPLVSASKLDLSGWFVAGYDGGDIYHSVSQARPRLLLLGLLLLTVGVGIFLVPAR.

Ser-2 is subject to N-acetylserine; by host. The interval 2–23 is interaction with STAT1; sequence STLPKPQRKTKRNTNRRPMDVK. The interaction with EIF2AK2/PKR stretch occupies residues 2-58; it reads STLPKPQRKTKRNTNRRPMDVKFPGGGQIVGGVYLLPRRGPRLGVRATRKTSERSQP. Positions 2 to 59 are interaction with DDX3X; that stretch reads STLPKPQRKTKRNTNRRPMDVKFPGGGQIVGGVYLLPRRGPRLGVRATRKTSERSQPR. The interval 2–75 is disordered; the sequence is STLPKPQRKT…PKARQPQGRH (74 aa). Residues 2 to 168 lie on the Cytoplasmic side of the membrane; the sequence is STLPKPQRKT…EDGINYATGN (167 aa). Short sequence motifs (nuclear localization signal) lie at residues 5–13 and 38–43; these read PKPQRKTKR and PRRGPR. Residues 7 to 16 are compositionally biased toward basic residues; sequence PQRKTKRNTN. The span at 32–47 shows a compositional bias: low complexity; that stretch reads GGVYLLPRRGPRLGVR. At Ser-53 the chain carries Phosphoserine; by host. 2 short sequence motifs (nuclear localization signal) span residues 58–64 and 66–71; these read PRGRRQP and PKARQP. The residue at position 99 (Ser-99) is a Phosphoserine; by host. The interval 112-152 is important for endoplasmic reticulum and mitochondrial localization; that stretch reads PRRRSRNLGKVIDTLTCGFADLMGYIPVVGAPLGGVAAALA. The residue at position 116 (Ser-116) is a Phosphoserine; by host PKA. The interaction with APOA2 stretch occupies residues 122–173; sequence VIDTLTCGFADLMGYIPVVGAPLGGVAAALAHGVRAIEDGINYATGNLPGCS. The segment at 164-167 is important for lipid droplets localization; sequence YATG. A helical membrane pass occupies residues 169–189; the sequence is LPGCSFSIFLLALLSCLTTPA. A propeptide spans 178-191 (ER anchor for the core protein, removed in mature form by host signal peptidase); the sequence is LLALLSCLTTPASA. The Lumenal segment spans residues 190 to 358; it reads SALTYGNSSG…FGGHWGILLA (169 aa). N-linked (GlcNAc...) asparagine; by host glycosylation is found at Asn-196, Asn-209, Asn-234, and Asn-250. An important for fusion region spans residues 265–296; that stretch reads LAGAAVVCSSLYIGDLCGSLFLAGQLFTFQPR. The N-linked (GlcNAc...) asparagine; by host glycan is linked to Asn-305. Residues 359 to 379 form a helical membrane-spanning segment; it reads VAYFGMAGNWLKVLAVLFLFA. The Lumenal portion of the chain corresponds to 380–730; the sequence is GVEATTTVGH…WEYIVLMFLV (351 aa). Positions 385 to 411 are HVR1; the sequence is TTVGHGVARTTAGITGLFSPGASQNLQ. Residue Asn-415 is glycosylated (N-linked (GlcNAc...) asparagine; by host). N-linked (GlcNAc...) (high mannose) asparagine; by host glycosylation is found at Asn-422 and Asn-429. 4 disulfides stabilise this stretch: Cys-428-Cys-553, Cys-451-Cys-458, Cys-487-Cys-495, and Cys-504-Cys-509. Asn-447 carries an N-linked (GlcNAc...) asparagine; by host glycan. The segment at 474-479 is HVR2; that stretch reads KVNISG. N-linked (GlcNAc...) asparagine; by host glycosylation is present at Asn-476. A CD81-binding 1 region spans residues 481–494; the sequence is SDDRPYCWHYAPRP. Asn-533 is a glycosylation site (N-linked (GlcNAc...) asparagine; by host). A CD81-binding 2 region spans residues 545–552; the sequence is PPTGGWFG. A glycan (N-linked (GlcNAc...) asparagine; by host) is linked at Asn-557. Cysteines 565 and 570 form a disulfide. The N-linked (GlcNAc...) asparagine; by host glycan is linked to Asn-578. 3 cysteine pairs are disulfide-bonded: Cys-586–Cys-590, Cys-602–Cys-625, and Cys-612–Cys-649. 2 N-linked (GlcNAc...) (high mannose) asparagine; by host glycosylation sites follow: Asn-628 and Asn-650. An intrachain disulfide couples Cys-657 to Cys-682. The tract at residues 665-676 is PKR/eIF2-alpha phosphorylation homology domain (PePHD); the sequence is IEMSPLLFSTTQ. The chain crosses the membrane as a helical span at residues 731-751; that stretch reads LADARICTCLWLMLLISNVEA. Over 752 to 762 the chain is Lumenal; sequence AVERLVVLNAA. The helical transmembrane segment at 763–783 threads the bilayer; the sequence is SAAGTAGWWWAVLFLCCVWYV. The Cytoplasmic segment spans residues 784 to 786; the sequence is KGR. A helical transmembrane segment spans residues 787-808; sequence LVPACTYMALGMWPLLLTILAL. Residues 809 to 818 lie on the Lumenal side of the membrane; it reads PHRAYAMDNE. The helical transmembrane segment at 819–839 threads the bilayer; sequence QAASLGAVGLLAITIFTITPT. At 840–843 the chain is on the cytoplasmic side; it reads YKKL. The helical transmembrane segment at 844–863 threads the bilayer; sequence LTCFIWWNQYFLARAEAMVH. Over 864–886 the chain is Lumenal; it reads EWVPDLRVRGGRDSIILLTCLLH. Residues 887 to 907 traverse the membrane as a helical segment; it reads PQLGFEVTKILLAILAPLYIL. Residues 908–1031 form the Peptidase C18 domain; that stretch reads QYSLLKVPYF…DMQRGGWKLL (124 aa). The Cytoplasmic portion of the chain corresponds to 908-1662; the sequence is QYSLLKVPYF…CMSADLEVIT (755 aa). A protease NS2-3 region spans residues 909–1211; the sequence is YSLLKVPYFV…PVENMETTMR (303 aa). Cys-927 carries S-palmitoyl cysteine; by host lipidation. The interaction with host SCPS1 stretch occupies residues 934-954; it reads AGGRYVQACLLRLGAWTGTFI. Catalysis depends on for protease NS2 activity; shared with dimeric partner residues His-957, Glu-977, and Cys-998. Positions 1032-1213 constitute a Peptidase S29 domain; it reads APITAYAQQT…ENMETTMRSP (182 aa). Residues His-1088 and Asp-1112 each act as charge relay system; for serine protease NS3 activity in the active site. Zn(2+) contacts are provided by Cys-1128 and Cys-1130. Ser-1170 functions as the Charge relay system; for serine protease NS3 activity in the catalytic mechanism. Zn(2+) is bound by residues Cys-1176 and His-1180. The 153-residue stretch at 1222–1374 folds into the Helicase ATP-binding domain; the sequence is PAVPQTYQVG…PNITETALPT (153 aa). 1235–1242 is an ATP binding site; the sequence is APTGSGKS. Mg(2+) is bound by residues Ser-1242 and Glu-1322. The DECH box motif lies at 1321–1324; that stretch reads DECH. The segment at 1491-1503 is RNA-binding; it reads QRRGRTGRGKPGV. Residues 1663–1683 traverse the membrane as a helical segment; it reads STWVLVGGVLAALAAYCLSVG. Residues 1684–1695 are NS3-binding; that stretch reads CVVICGRITLTG. Over 1684–1810 the chain is Cytoplasmic; it reads CVVICGRITL…SLTSPLRTSQ (127 aa). A helical membrane pass occupies residues 1811 to 1829; it reads TLLLNILGGWIAAQVAPPP. The Lumenal portion of the chain corresponds to 1830 to 1833; that stretch reads ASTA. The helical transmembrane segment at 1834 to 1854 threads the bilayer; it reads FVVSGLAGAAVGSIRLGRVLV. Asp-1855 is a topological domain (cytoplasmic). Residues 1856-1876 form a helical membrane-spanning segment; sequence VLAGYGAGVSGALVAFKIMSG. The Lumenal portion of the chain corresponds to 1877-1886; the sequence is DCPTTEDMVN. Residues 1887–1907 traverse the membrane as a helical segment; that stretch reads LLPALLSPGALVVGVVCAAIL. Residues 1908-1977 are Cytoplasmic-facing; sequence RRHVGPAEGA…WVNEDTATPC (70 aa). Cys-1977 carries the S-palmitoyl cysteine; by host lipid modification. The stretch at 1978–2007 is an intramembrane region; sequence ATSWLRDVWDWVCTVLSDFKVWLQAKLFPR. The Cytoplasmic portion of the chain corresponds to 2008-2998; it reads LPGIPFLSCQ…YHSVSQARPR (991 aa). Cys-2016, Cys-2034, Cys-2036, and Cys-2057 together coordinate Zn(2+). Residues 2125 to 2213 form an FKBP8-binding region; it reads EFFTEVDGVR…ASSSASQLSA (89 aa). Residues 2125-2338 are transcriptional activation; it reads EFFTEVDGVR…PIPPPRRKRL (214 aa). Residues 2140–2144 form an interaction with non-structural protein 4A region; the sequence is PPCKP. Residues 2189–2223 form a disordered region; it reads ETASRRLKRGSPPSLASSSASQLSAPSLKATCTTS. An interaction with host SKP2 region spans residues 2194–2446; it reads RLKRGSPPSL…ALITPCAAEE (253 aa). Position 2199 is a phosphoserine; by host; in p56 (Ser-2199). Residues 2199-2216 are compositionally biased toward low complexity; that stretch reads SPPSLASSSASQLSAPSL. Phosphoserine; by host; in p58 occurs at positions 2202, 2206, 2209, 2212, and 2215. The tract at residues 2215–2254 is ISDR; it reads SLKATCTTSKDHPDMELIEANLLWRQEMGGNITRVESENK. The segment at 2215-2280 is interaction with EIF2AK2/PKR; the sequence is SLKATCTTSK…REISVSAECH (66 aa). An NS4B-binding region spans residues 2254 to 2312; sequence KVVVLDSFEPLTAEYDEREISVSAECHRPPRHKFPPALPIWARPDYNPPLLQAWQMPGY. A V3 region spans residues 2305 to 2383; the sequence is QAWQMPGYEP…SITSPDPPAP (79 aa). The SH3-binding signature appears at 2328–2331; that stretch reads APIP. Residues 2333-2341 carry the Nuclear localization signal motif; sequence PRRKRLVHL. Lys-2356 is covalently cross-linked (Glycyl lysine isopeptide (Lys-Gly) (interchain with G-Cter in ubiquitin)). The tract at residues 2359–2418 is disordered; the sequence is VEGSSDPGPSSDSGLSITSPDPPAPTTPDDACSEAESYSSMPPLEGEPGDPDLSSGSWST. Positions 2361–2372 are enriched in low complexity; sequence GSSDPGPSSDSG. A phosphoserine; by host mark is found at Ser-2457 and Ser-2470. Positions 2642–2760 constitute a RdRp catalytic domain; it reads PMGFSYDTRC…ICESAGVQED (119 aa). Asp-2648, Asp-2746, and Asp-2747 together coordinate Mg(2+). Residues 2999-3019 traverse the membrane as a helical segment; it reads LLLLGLLLLTVGVGIFLVPAR.

The protein belongs to the hepacivirus polyprotein family. In terms of assembly, homooligomer. Interacts with E1 (via C-terminus). Interacts with the non-structural protein 5A. Interacts (via N-terminus) with host STAT1 (via SH2 domain); this interaction results in decreased STAT1 phosphorylation and ubiquitin-mediated proteasome-dependent STAT1 degradation, leading to decreased IFN-stimulated gene transcription. Interacts with host STAT3; this interaction constitutively activates STAT3. Interacts with host LTBR receptor. Interacts with host TNFRSF1A receptor and possibly induces apoptosis. Interacts with host HNRPK. Interacts with host YWHAE. Interacts with host UBE3A/E6AP. Interacts with host DDX3X. Interacts with host APOA2. Interacts with host RXRA protein. Interacts with host SP110 isoform 3/Sp110b; this interaction sequesters the transcriptional corepressor SP110 away from the nucleus. Interacts with host CREB3 nuclear transcription protein; this interaction triggers cell transformation. Interacts with host ACY3. Interacts with host C1QR1. Interacts with host RBM24; this interaction, which enhances the interaction of the mature core protein with 5'-UTR, may inhibit viral translation and favor replication. Interacts with host EIF2AK2/PKR; this interaction induces the autophosphorylation of EIF2AK2. Part of the viral assembly initiation complex composed of NS2, E1, E2, NS3, NS4A, NS5A and the mature core protein. Forms a heterodimer with envelope glycoprotein E2. Interacts with mature core protein. Interacts with protease NS2. The heterodimer E1/E2 interacts with host CLDN1; this interaction plays a role in viral entry into host cell. Interacts with host SPSB2 (via C-terminus). Part of the viral assembly initiation complex composed of NS2, E1, E2, NS3, NS4A, NS5A and the mature core protein. Interacts with host NEURL3; this interaction prevents E1 binding to glycoprotein E2. As to quaternary structure, forms a heterodimer with envelope glycoprotein E1. Interacts with host CD81 and SCARB1 receptors; these interactions play a role in viral entry into host cell. Interacts with host EIF2AK2/PKR; this interaction inhibits EIF2AK2 and probably allows the virus to evade the innate immune response. Interacts with host CD209/DC-SIGN and CLEC4M/DC-SIGNR. Interact with host SPCS1; this interaction is essential for viral particle assembly. Interacts with protease NS2. The heterodimer E1/E2 interacts with host CLDN1; this interaction plays a role in viral entry into host cell. Part of the viral assembly initiation complex composed of NS2, E1, E2, NS3, NS4A, NS5A and the mature core protein. Interacts with host SLC3A2/4F2hc; the interaction may facilitate viral entry into host cell. Interacts with human PLSCR1. In terms of assembly, homohexamer. Homoheptamer. Interacts with protease NS2. Homodimer. Interacts with host SPCS1; this interaction is essential for viral particle assembly. Interacts with envelope glycoprotein E1. Interacts with envelope glycoprotein E2. Interacts with viroporin p7. Interacts with serine protease/helicase NS3. Part of the replication complex composed of NS2, NS3, NS4A, NS4B, NS5A and the RNA-directed RNA polymerase embedded in an ER-derived membranous web. Part of the viral assembly initiation complex composed of NS2, E1, E2, NS3, NS4A, NS5A and the mature core protein. As to quaternary structure, interacts with protease NS2. Interacts with non-structural protein 4A; this interaction stabilizes the folding of NS3 serine protease. NS3-NS4A interaction is essential for NS3 activation and allows membrane anchorage of the latter. NS3/NS4A complex also prevents phosphorylation of host IRF3, thus preventing the establishment of dsRNA induced antiviral state. Interacts with host MAVS; this interaction leads to the cleavage and inhibition of host MAVS. Interacts with host TICAM1; this interaction leads to the cleavage and inhibition of host TICAM1. Interacts with host TANK-binding kinase/TBK1; this interaction results in the inhibition of the association between TBK1 and IRF3, which leads to the inhibition of IRF3 activation. Interacts with host RBM24. Part of the replication complex composed of NS2, NS3, NS4A, NS4B, NS5A and the RNA-directed RNA polymerase embedded in an ER-derived membranous web. Part of the viral assembly initiation complex composed of NS2, E1, E2, NS3, NS4A, NS5A and the mature core protein. In terms of assembly, interacts with NS3 serine protease; this interaction stabilizes the folding of NS3 serine protease. NS3-NS4A interaction is essential for NS3 activation and allows membrane anchorage of the latter. Interacts with non-structural protein 5A (via N-terminus). Part of the replication complex composed of NS2, NS3, NS4A, NS4B, NS5A and the RNA-directed RNA polymerase embedded in an ER-derived membranous web. Part of the viral assembly initiation complex composed of NS2, E1, E2, NS3, NS4A, NS5A and the mature core protein. Homomultimer. Interacts with non-structural protein NS5A. Interacts with host PLA2G4C; this interaction likely initiates the recruitment of replication complexes to lipid droplets. Interacts with host STING; this interaction disrupts the interaction between STING and TBK1 thereby suppressing the interferon signaling. Part of the replication complex composed of NS2, NS3, NS4A, NS4B, NS5A and the RNA-directed RNA polymerase embedded in an ER-derived membranous web. As to quaternary structure, monomer. Homodimer; dimerization is required for RNA-binding. Interacts with the mature core protein. Interacts (via N-terminus) with non-structural protein 4A. Interacts with non-structural protein 4B. Interacts (via region D2) with RNA-directed RNA polymerase. Part of the viral assembly initiation complex composed of NS2, E1, E2, NS3, NS4A, NS5A and the mature core protein. Part of the replication complex composed of NS2, NS3, NS4A, NS4B, NS5A and the RNA-directed RNA polymerase embedded in an ER-derived membranous web. Interacts with host GRB2. Interacts with host BIN1. Interacts with host PIK3R1. Interacts with host SRCAP. Interacts with host FKBP8. Interacts (via C-terminus) with host VAPB (via MSP domain). Interacts with host EIF2AK2/PKR; this interaction leads to disruption of EIF2AK2 dimerization by NS5A and probably allows the virus to evade the innate immune response. Interacts (via N-terminus) with host PACSIN2 (via N-terminus); this interaction attenuates protein kinase C alpha-mediated phosphorylation of PACSIN2 by disrupting the interaction between PACSIN2 and PRKCA. Interacts (via N-terminus) with host SRC kinase (via SH2 domain). Interacts with most Src-family kinases. Interacts with host IFI27 and SKP2; promotes the ubiquitin-mediated proteasomal degradation of NS5A. Interacts with host GPS2. Interacts with host TNFRSF21; this interaction allows the modulation by the virus of JNK, p38 MAPK, STAT3, and Akt signaling pathways in a DR6-dependent manner. Interacts (via N-terminus) with host CIDEB (via N-terminus); this interaction seems to regulate the association of HCV particles with APOE. Interacts with host CHKA/Choline Kinase-alpha; CHKA bridges host PI4KA and NS5A and potentiates NS5A-stimulated PI4KA activity, which then facilitates the targeting of the ternary complex to the ER for viral replication. Interacts with host SPSB2 (via C-terminus); this interaction targets NS5A for ubiquitination and degradation. Interacts with host RAB18; this interaction may promote the association of NS5A and other replicase components with lipid droplets. Interacts (via region D2) with host PPIA/CYPA; the interaction stimulates RNA-binding ability of NS5A and is dependent on the peptidyl-prolyl cis-trans isomerase activity of PPIA/CYPA. Interacts with host TRIM14; this interaction induces the degradation of NS5A. In terms of assembly, homooligomer. Interacts with non-structural protein 5A. Interacts with host VAPB. Interacts with host PRK2/PKN2. Interacts with host HNRNPA1 and SEPT6; these interactions facilitate viral replication. Part of the replication complex composed of NS2, NS3, NS4A, NS4B, NS5A and the RNA-directed RNA polymerase. Zn(2+) serves as cofactor. Mg(2+) is required as a cofactor. In terms of processing, specific enzymatic cleavages in vivo yield mature proteins. The structural proteins, core, E1, E2 and p7 are produced by proteolytic processing by host signal peptidases. The core protein precursor is synthesized as a 23 kDa, which is retained in the ER membrane through the hydrophobic signal peptide. Cleavage by the signal peptidase releases the 21 kDa mature core protein. The cleavage of the core protein precursor occurs between aminoacids 176 and 188 but the exact cleavage site is not known. Some degraded forms of the core protein appear as well during the course of infection. The other proteins (p7, NS2, NS3, NS4A, NS4B, NS5A and NS5B) are cleaved by the viral proteases. Autoprocessing between NS2 and NS3 is mediated by the NS2 cysteine protease catalytic domain and regulated by the NS3 N-terminal domain. Post-translationally, phosphorylated by host PKC and PKA. Ubiquitinated; mediated by UBE3A and leading to core protein subsequent proteasomal degradation. In terms of processing, highly N-glycosylated. Post-translationally, palmitoylation is required for NS2/3 autoprocessing and E2 recruitment to membranes. Palmitoylated. This modification may play a role in its polymerization or in protein-protein interactions. In terms of processing, phosphorylated on serines in a basal form termed p56. p58 is a hyperphosphorylated form of p56. p56 and p58 coexist in the cell in roughly equivalent amounts. Hyperphosphorylation is dependent on the presence of NS4A. Host CSNK1A1/CKI-alpha or RPS6KB1 kinases may be responsible for NS5A phosphorylation. Post-translationally, tyrosine phosphorylation is essential for the interaction with host SRC. The N-terminus is phosphorylated by host PRK2/PKN2.

The protein localises to the host endoplasmic reticulum membrane. It localises to the host mitochondrion membrane. It is found in the virion. Its subcellular location is the host cytoplasm. The protein resides in the host nucleus. The protein localises to the host lipid droplet. It localises to the virion membrane. It is found in the host mitochondrion. Its subcellular location is the host cell membrane. The protein resides in the host perinuclear region. The enzyme catalyses Hydrolysis of four peptide bonds in the viral precursor polyprotein, commonly with Asp or Glu in the P6 position, Cys or Thr in P1 and Ser or Ala in P1'.. It catalyses the reaction a ribonucleoside 5'-triphosphate + H2O = a ribonucleoside 5'-diphosphate + phosphate + H(+). The catalysed reaction is ATP + H2O = ADP + phosphate + H(+). It carries out the reaction RNA(n) + a ribonucleoside 5'-triphosphate = RNA(n+1) + diphosphate. Its activity is regulated as follows. Inhibited by the antiviral drug hexamethylene amiloride. Inhibition by amantadine appears to be genotype-dependent. Also inhibited by long-alkyl-chain iminosugar derivatives. With respect to regulation, activity is up-regulated by PRK2/PKN2-mediated phosphorylation. Its function is as follows. Packages viral RNA to form a viral nucleocapsid, and promotes virion budding. Participates in the viral particle production as a result of its interaction with the non-structural protein 5A. Binds RNA and may function as a RNA chaperone to induce the RNA structural rearrangements taking place during virus replication. Modulates viral translation initiation by interacting with viral IRES and 40S ribosomal subunit. Affects various cell signaling pathways, host immunity and lipid metabolism. Prevents the establishment of cellular antiviral state by blocking the interferon-alpha/beta (IFN-alpha/beta) and IFN-gamma signaling pathways and by blocking the formation of phosphorylated STAT1 and promoting ubiquitin-mediated proteasome-dependent degradation of STAT1. Activates STAT3 leading to cellular transformation. Regulates the activity of cellular genes, including c-myc and c-fos. May repress the promoter of p53, and sequester CREB3 and SP110 isoform 3/Sp110b in the cytoplasm. Represses cell cycle negative regulating factor CDKN1A, thereby interrupting an important check point of normal cell cycle regulation. Targets transcription factors involved in the regulation of inflammatory responses and in the immune response: suppresses TNF-induced NF-kappa-B activation, and activates AP-1. Binds to dendritic cells (DCs) via C1QR1, resulting in down-regulation of T-lymphocytes proliferation. Alters lipid metabolism by interacting with hepatocellular proteins involved in lipid accumulation and storage. Induces up-regulation of FAS promoter activity, and thereby contributes to the increased triglyceride accumulation in hepatocytes (steatosis). Functionally, forms a heterodimer with envelope glycoprotein E2, which mediates virus attachment to the host cell, virion internalization through clathrin-dependent endocytosis and fusion with host membrane. Fusion with the host cell is most likely mediated by both E1 and E2, through conformational rearrangements of the heterodimer required for fusion rather than a classical class II fusion mechanism. E1/E2 heterodimer binds host apolipoproteins such as APOB and ApoE thereby forming a lipo-viro-particle (LVP). APOE associated to the LVP allows the initial virus attachment to cell surface receptors such as the heparan sulfate proteoglycans (HSPGs), syndecan-1 (SDC1), syndecan-1 (SDC2), the low-density lipoprotein receptor (LDLR) and scavenger receptor class B type I (SCARB1). The cholesterol transfer activity of SCARB1 allows E2 exposure and binding of E2 to SCARB1 and the tetraspanin CD81. E1/E2 heterodimer binding on CD81 activates the epithelial growth factor receptor (EGFR) signaling pathway. Diffusion of the complex E1-E2-EGFR-SCARB1-CD81 to the cell lateral membrane allows further interaction with Claudin 1 (CLDN1) and occludin (OCLN) to finally trigger HCV entry. Forms a heterodimer with envelope glycoprotein E1, which mediates virus attachment to the host cell, virion internalization through clathrin-dependent endocytosis and fusion with host membrane. Fusion with the host cell is most likely mediated by both E1 and E2, through conformational rearrangements of the heterodimer required for fusion rather than a classical class II fusion mechanism. The interaction between envelope glycoprotein E2 and host apolipoprotein E/APOE allows the proper assembly, maturation and infectivity of the viral particles. This interaction is probably promoted via the up-regulation of cellular autophagy by the virus. E1/E2 heterodimer binds host apolipoproteins such as APOB and APOE thereby forming a lipo-viro-particle (LVP). APOE associated to the LVP allows the initial virus attachment to cell surface receptors such as the heparan sulfate proteoglycans (HSPGs), syndecan-1 (SDC1), syndecan-1 (SDC2), the low-density lipoprotein receptor (LDLR) and scavenger receptor class B type I (SCARB1). The cholesterol transfer activity of SCARB1 allows E2 exposure and binding of E2 to SCARB1 and the tetraspanin CD81. E1/E2 heterodimer binding on CD81 activates the epithelial growth factor receptor (EGFR) signaling pathway. Diffusion of the complex E1-E2-EGFR-SCARB1-CD81 to the cell lateral membrane allows further interaction with Claudin 1 (CLDN1) and occludin (OCLN) to finally trigger HCV entry. Inhibits host EIF2AK2/PKR activation, preventing the establishment of an antiviral state. Viral ligand for CD209/DC-SIGN and CLEC4M/DC-SIGNR, which are respectively found on dendritic cells (DCs), and on liver sinusoidal endothelial cells and macrophage-like cells of lymph node sinuses. These interactions allow the capture of circulating HCV particles by these cells and subsequent facilitated transmission to permissive cells such as hepatocytes and lymphocyte subpopulations. The interaction between E2 and host amino acid transporter complex formed by SLC3A2 and SLC7A5/LAT1 may facilitate viral entry into host cell. In terms of biological role, ion channel protein that acts as a viroporin and plays an essential role in the assembly, envelopment and secretion of viral particles. Regulates the host cell secretory pathway, which induces the intracellular retention of viral glycoproteins and favors assembly of viral particles. Creates a pore in acidic organelles and releases Ca(2+) and H(+) in the cytoplasm of infected cells, leading to a productive viral infection. High levels of cytoplasmic Ca(2+) may trigger membrane trafficking and transport of viral ER-associated proteins to viroplasms, sites of viral genome replication. This ionic imbalance induces the assembly of the inflammasome complex, which triggers the maturation of pro-IL-1beta into IL-1beta through the action of caspase-1. Targets also host mitochondria and induces mitochondrial depolarization. In addition of its role as a viroporin, acts as a lipid raft adhesion factor. Its function is as follows. Cysteine protease required for the proteolytic auto-cleavage between the non-structural proteins NS2 and NS3. The N-terminus of NS3 is required for the function of NS2 protease (active region NS2-3). Promotes the initiation of viral particle assembly by mediating the interaction between structural and non-structural proteins. Functionally, displays three enzymatic activities: serine protease with a chymotrypsin-like fold, NTPase and RNA helicase. NS3 serine protease, in association with NS4A, is responsible for the cleavages of NS3-NS4A, NS4A-NS4B, NS4B-NS5A and NS5A-NS5B. The NS3/NS4A complex prevents phosphorylation of host IRF3, thus preventing the establishment of dsRNA induced antiviral state. The NS3/NS4A complex induces host amino acid transporter component SLC3A2, thus contributing to HCV propagation. NS3 RNA helicase binds to RNA and unwinds both dsDNA and dsRNA in the 3' to 5' direction, and likely resolves RNA complicated stable secondary structures in the template strand. Binds a single ATP and catalyzes the unzipping of a single base pair of dsRNA. Inhibits host antiviral proteins TBK1 and IRF3 thereby preventing the establishment of an antiviral state. Cleaves host MAVS/CARDIF thereby preventing the establishment of an antiviral state. Cleaves host TICAM1/TRIF, thereby disrupting TLR3 signaling and preventing the establishment of an antiviral state. Induces a specific membrane alteration that serves as a scaffold for the virus replication complex. This membrane alteration gives rise to the so-called ER-derived membranous web that contains the replication complex. NS4B self-interaction contributes to its function in membranous web formation. Promotes host TRIF protein degradation in a CASP8-dependent manner thereby inhibiting host TLR3-mediated interferon signaling. Disrupts the interaction between STING and TBK1 contributing to the inhibition of interferon signaling. In terms of biological role, phosphorylated protein that is indispensable for viral replication and assembly. Both hypo- and hyperphosphorylated states are required for the viral life cycle. The hyperphosphorylated form of NS5A is an inhibitor of viral replication. Involved in RNA-binding and especially in binding to the viral genome. Zinc is essential for RNA-binding. Participates in the viral particle production as a result of its interaction with the mature viral core protein. Its interaction with host VAPB may target the viral replication complex to vesicles. Down-regulates viral IRES translation initiation. Mediates interferon resistance, presumably by interacting with and inhibiting host EIF2AK2/PKR. Prevents BIN1-induced apoptosis. Acts as a transcriptional activator of some host genes important for viral replication when localized in the nucleus. Via the interaction with host PACSIN2, modulates lipid droplet formation in order to promote virion assembly. Modulates TNFRSF21/DR6 signaling pathway for viral propagation. Its function is as follows. RNA-dependent RNA polymerase that performs primer-template recognition and RNA synthesis during viral replication. Initiates RNA transcription/replication at a flavin adenine dinucleotide (FAD), resulting in a 5'- FAD cap on viral RNAs. In this way, recognition of viral 5' RNA by host pattern recognition receptors can be bypassed, thereby evading activation of antiviral pathways. The chain is Genome polyprotein from Hepatitis C virus genotype 6a (isolate 6a33) (HCV).